A 576-amino-acid chain; its full sequence is 2-succinyl-5-enolpyruvyl-6-hydroxy-3-cyclohexene-1-carboxylate synthase (576 aa).

This sequence belongs to the TPP enzyme family. MenD subfamily. In terms of assembly, homodimer. Requires Mg(2+) as cofactor. Mn(2+) is required as a cofactor. The cofactor is thiamine diphosphate.

The enzyme catalyses isochorismate + 2-oxoglutarate + H(+) = 5-enolpyruvoyl-6-hydroxy-2-succinyl-cyclohex-3-ene-1-carboxylate + CO2. The protein operates within quinol/quinone metabolism; 1,4-dihydroxy-2-naphthoate biosynthesis; 1,4-dihydroxy-2-naphthoate from chorismate: step 2/7. It participates in quinol/quinone metabolism; menaquinone biosynthesis. Its function is as follows. Catalyzes the thiamine diphosphate-dependent decarboxylation of 2-oxoglutarate and the subsequent addition of the resulting succinic semialdehyde-thiamine pyrophosphate anion to isochorismate to yield 2-succinyl-5-enolpyruvyl-6-hydroxy-3-cyclohexene-1-carboxylate (SEPHCHC). The polypeptide is 2-succinyl-5-enolpyruvyl-6-hydroxy-3-cyclohexene-1-carboxylate synthase (Photobacterium profundum (strain SS9)).